The chain runs to 477 residues: Bifunctional protein HldE (477 aa).

The tract at residues 1–318 (MKVTLPEFER…ENAVRGRAET (318 aa)) is ribokinase. Lysine 179 carries the N6-acetyllysine modification. An ATP-binding site is contributed by 195–198 (NLSE). Aspartate 264 is a catalytic residue. The cytidylyltransferase stretch occupies residues 344–477 (MTNGVFDILH…IKKIQQDKKG (134 aa)).

The protein in the N-terminal section; belongs to the carbohydrate kinase PfkB family. It in the C-terminal section; belongs to the cytidylyltransferase family. Homodimer.

The catalysed reaction is D-glycero-beta-D-manno-heptose 7-phosphate + ATP = D-glycero-beta-D-manno-heptose 1,7-bisphosphate + ADP + H(+). It catalyses the reaction D-glycero-beta-D-manno-heptose 1-phosphate + ATP + H(+) = ADP-D-glycero-beta-D-manno-heptose + diphosphate. It participates in nucleotide-sugar biosynthesis; ADP-L-glycero-beta-D-manno-heptose biosynthesis; ADP-L-glycero-beta-D-manno-heptose from D-glycero-beta-D-manno-heptose 7-phosphate: step 1/4. Its pathway is nucleotide-sugar biosynthesis; ADP-L-glycero-beta-D-manno-heptose biosynthesis; ADP-L-glycero-beta-D-manno-heptose from D-glycero-beta-D-manno-heptose 7-phosphate: step 3/4. Its function is as follows. Catalyzes the phosphorylation of D-glycero-D-manno-heptose 7-phosphate at the C-1 position to selectively form D-glycero-beta-D-manno-heptose-1,7-bisphosphate. Catalyzes the ADP transfer from ATP to D-glycero-beta-D-manno-heptose 1-phosphate, yielding ADP-D-glycero-beta-D-manno-heptose. This Shigella dysenteriae serotype 1 (strain Sd197) protein is Bifunctional protein HldE.